A 545-amino-acid chain; its full sequence is Phospholipase B-like 1 (545 aa).

Positions 1-35 are cleaved as a signal peptide; it reads MSRHSQDERLGLPQPPALLPLLLLLLAVAVPLSQA. Residue Asn-68 is glycosylated (N-linked (GlcNAc...) (high mannose) asparagine; alternate). Asn-68 is a glycosylation site (N-linked (GlcNAc...) (hybrid) asparagine; alternate). The propeptide at 206-224 is removed in mature form; the sequence is LSPTKNSSLKFFKRWDMGH. N-linked (GlcNAc...) (high mannose) asparagine; alternate glycosylation is found at Asn-305, Asn-363, and Asn-408. 3 N-linked (GlcNAc...) (hybrid) asparagine; alternate glycosylation sites follow: Asn-305, Asn-363, and Asn-408. 2 disulfide bridges follow: Cys-467-Cys-472 and Cys-471-Cys-486. N-linked (GlcNAc...) (high mannose) asparagine; alternate glycosylation occurs at Asn-523. Asn-523 is a glycosylation site (N-linked (GlcNAc...) (hybrid) asparagine; alternate).

This sequence belongs to the phospholipase B-like family. As to quaternary structure, may form a homodimer, each monomer is composed of a chain A and a chain B. Post-translationally, the maturation cleavages that produces chains A and B are required to open the putative substrate binding pocket. Both chains A and B remain associated in the mature protein.

The protein resides in the lysosome. Exhibits a weak phospholipase activity, acting on various phospholipids, including phosphatidylcholine, phosphatidylinositol, phosphatidylethanolamine and lysophospholipids. However, in view of the small size of the putative binding pocket, it has been proposed that it may act rather as an amidase or a peptidase. This chain is Phospholipase B-like 1 (PLBD1), found in Bos taurus (Bovine).